The chain runs to 354 residues: MADQNNPWDTTPAADSAAQSADAWGTPTTAPTDGGGADWLTSTPAPNVEHFNILDPFHKTLIPLDSWVTEGIDWVVTHFRPVFQGVRVPVDYILNGFQQLLLGMPAPVAIIVFALIAWQISGVGMGVATLVSLIAIGAIGAWSQAMVTLALVLTALLFCIVIGLPLGIWLARSPRAAKIIRPLLDAMQTTPAFVYLVPIVMLFGIGNVPGVVVTIIFALPPIIRLTILGINQVPADLIEASRSFGASPRQMLFKVQLPLAMPTIMAGVNQTLMLALSMVVIASMIAVGGLGQMVLRGIGRLDMGLATVGGVGIVILAIILDRLTQAVGRDSRSRGNRRWYTTGPVGLLTRPFIK.

Positions 1-41 (MADQNNPWDTTPAADSAAQSADAWGTPTTAPTDGGGADWLT) are disordered. The Cytoplasmic portion of the chain corresponds to 1-99 (MADQNNPWDT…VDYILNGFQQ (99 aa)). The span at 13 to 32 (AADSAAQSADAWGTPTTAPT) shows a compositional bias: low complexity. The helical transmembrane segment at 100-120 (LLLGMPAPVAIIVFALIAWQI) threads the bilayer. Ser121 is a topological domain (periplasmic). The chain crosses the membrane as a helical span at residues 122-142 (GVGMGVATLVSLIAIGAIGAW). Topologically, residues 143–148 (SQAMVT) are cytoplasmic. Positions 145 to 324 (AMVTLALVLT…ILAIILDRLT (180 aa)) constitute an ABC transmembrane type-1 domain. The chain crosses the membrane as a helical span at residues 149 to 169 (LALVLTALLFCIVIGLPLGIW). The Periplasmic segment spans residues 170-198 (LARSPRAAKIIRPLLDAMQTTPAFVYLVP). The chain crosses the membrane as a helical span at residues 199 to 219 (IVMLFGIGNVPGVVVTIIFAL). Residues 220–270 (PPIIRLTILGINQVPADLIEASRSFGASPRQMLFKVQLPLAMPTIMAGVNQ) are Cytoplasmic-facing. Residues 271-291 (TLMLALSMVVIASMIAVGGLG) form a helical membrane-spanning segment. Residues 292–300 (QMVLRGIGR) are Periplasmic-facing. The chain crosses the membrane as a helical span at residues 301–321 (LDMGLATVGGVGIVILAIILD). Residues 322 to 354 (RLTQAVGRDSRSRGNRRWYTTGPVGLLTRPFIK) are Cytoplasmic-facing.

The protein belongs to the binding-protein-dependent transport system permease family. CysTW subfamily. In terms of assembly, the complex is composed of two ATP-binding proteins (ProV), two transmembrane proteins (ProW) and a solute-binding protein (ProX).

The protein localises to the cell inner membrane. Part of the ProU ABC transporter complex involved in glycine betaine and proline betaine uptake. Probably responsible for the translocation of the substrate across the membrane. The protein is Glycine betaine/proline betaine transport system permease protein ProW of Escherichia coli (strain K12).